Here is a 179-residue protein sequence, read N- to C-terminus: Large ribosomal subunit protein uL5 (179 aa).

It belongs to the universal ribosomal protein uL5 family. As to quaternary structure, part of the 50S ribosomal subunit; part of the 5S rRNA/L5/L18/L25 subcomplex. Contacts the 5S rRNA and the P site tRNA. Forms a bridge to the 30S subunit in the 70S ribosome.

This is one of the proteins that bind and probably mediate the attachment of the 5S RNA into the large ribosomal subunit, where it forms part of the central protuberance. In the 70S ribosome it contacts protein S13 of the 30S subunit (bridge B1b), connecting the 2 subunits; this bridge is implicated in subunit movement. Contacts the P site tRNA; the 5S rRNA and some of its associated proteins might help stabilize positioning of ribosome-bound tRNAs. The protein is Large ribosomal subunit protein uL5 of Rickettsia akari (strain Hartford).